Consider the following 76-residue polypeptide: Large ribosomal subunit protein uL29 (76 aa).

This sequence belongs to the universal ribosomal protein uL29 family.

The sequence is that of Large ribosomal subunit protein uL29 from Corynebacterium diphtheriae (strain ATCC 700971 / NCTC 13129 / Biotype gravis).